A 450-amino-acid chain; its full sequence is Tubulin beta-3 chain (450 aa).

GTP contacts are provided by Gln11, Glu69, Ser138, Gly142, Thr143, Gly144, Asn204, and Asn226. A Mg(2+)-binding site is contributed by Glu69. Positions 420-450 (SEYQQYQDATADEEGDYEDEEEGEYQQEEEY) are disordered. The span at 429–450 (TADEEGDYEDEEEGEYQQEEEY) shows a compositional bias: acidic residues.

Belongs to the tubulin family. Dimer of alpha and beta chains. A typical microtubule is a hollow water-filled tube with an outer diameter of 25 nm and an inner diameter of 15 nM. Alpha-beta heterodimers associate head-to-tail to form protofilaments running lengthwise along the microtubule wall with the beta-tubulin subunit facing the microtubule plus end conferring a structural polarity. Microtubules usually have 13 protofilaments but different protofilament numbers can be found in some organisms and specialized cells. The cofactor is Mg(2+).

It is found in the cytoplasm. Its subcellular location is the cytoskeleton. In terms of biological role, tubulin is the major constituent of microtubules, a cylinder consisting of laterally associated linear protofilaments composed of alpha- and beta-tubulin heterodimers. Microtubules grow by the addition of GTP-tubulin dimers to the microtubule end, where a stabilizing cap forms. Below the cap, tubulin dimers are in GDP-bound state, owing to GTPase activity of alpha-tubulin. This chain is Tubulin beta-3 chain (TUBB3), found in Arabidopsis thaliana (Mouse-ear cress).